The sequence spans 475 residues: Putative UDP-glucose glucosyltransferase (475 aa).

The protein belongs to the UDP-glycosyltransferase family.

The protein is Putative UDP-glucose glucosyltransferase of Fragaria ananassa (Strawberry).